The following is a 133-amino-acid chain: ATP synthase epsilon chain (133 aa).

It belongs to the ATPase epsilon chain family. In terms of assembly, F-type ATPases have 2 components, CF(1) - the catalytic core - and CF(0) - the membrane proton channel. CF(1) has five subunits: alpha(3), beta(3), gamma(1), delta(1), epsilon(1). CF(0) has three main subunits: a, b and c.

It localises to the cell membrane. Produces ATP from ADP in the presence of a proton gradient across the membrane. This chain is ATP synthase epsilon chain, found in Bacillus mycoides (strain KBAB4) (Bacillus weihenstephanensis).